Consider the following 658-residue polypeptide: Threonine--tRNA ligase (658 aa).

Residues 1 to 64 enclose the TGS domain; that stretch reads MSNTVSLQFP…GASGKLEIIT (64 aa). The tract at residues 246 to 548 is catalytic; the sequence is DHRRLGREMD…LIENFAGHMP (303 aa). Cys343, His394, and His525 together coordinate Zn(2+).

This sequence belongs to the class-II aminoacyl-tRNA synthetase family. Homodimer. Requires Zn(2+) as cofactor.

The protein localises to the cytoplasm. It catalyses the reaction tRNA(Thr) + L-threonine + ATP = L-threonyl-tRNA(Thr) + AMP + diphosphate + H(+). Its function is as follows. Catalyzes the attachment of threonine to tRNA(Thr) in a two-step reaction: L-threonine is first activated by ATP to form Thr-AMP and then transferred to the acceptor end of tRNA(Thr). Also edits incorrectly charged L-seryl-tRNA(Thr). This chain is Threonine--tRNA ligase, found in Brucella abortus (strain S19).